A 150-amino-acid chain; its full sequence is Endoribonuclease YbeY (150 aa).

Histidine 115, histidine 119, and histidine 125 together coordinate Zn(2+).

It belongs to the endoribonuclease YbeY family. Zn(2+) is required as a cofactor.

It is found in the cytoplasm. Single strand-specific metallo-endoribonuclease involved in late-stage 70S ribosome quality control and in maturation of the 3' terminus of the 16S rRNA. The chain is Endoribonuclease YbeY from Aquifex aeolicus (strain VF5).